Here is a 238-residue protein sequence, read N- to C-terminus: Lipoarabinomannan carrier protein LprG (238 aa).

The first 26 residues, Met1–Gly26, serve as a signal peptide directing secretion. Cys27 is lipidated: N-palmitoyl cysteine. Residue Cys27 is the site of S-diacylglycerol cysteine attachment.

It belongs to the LppX/LprAFG lipoprotein family. Post-translationally, modified by Lgt on Cys-27 with an S-linked diacylglyceral, signal peptide is removed by LspA, Cys-27 is further modifed with a fatty acid on its amino group by Lnt yielding a triacylated protein. Probably glycosylated, which is required for T-cell activation.

It is found in the cell inner membrane. Its subcellular location is the secreted. The protein localises to the cell wall. Its function is as follows. Helps membrane protein ML0556 (P55) transport triacylglycerides (TAG) across the inner cell membrane into the periplasm and probably ultimately to the outer membrane. Binds TAG in its hydrophobic cavity and transfers it between lipid bilayers. TAG probably regulates lipid metabolism and growth regulation and plays a structural role in the outer membrane. Binds di- and triacylated phosphatidyl-myo-inositol mannosides (PIMs), and glycolipid lipoglycan modulins lipoarabinomannan (LAM) and lipomannan (LM), facilitating their recognition by TLR2. Required for activity of drug efflux transporter ML0556. Required, probably with ML0556, for normal surface localization of LAM. In terms of biological role, constitutes a host TLR2 agonist (toll-like receptor) able to stimulate proliferation of CD4+ T-cells derived from a human leprosy patient following protein processing/presentation by MHC class II molecules in peripheral blood mononuclear cells. This is Lipoarabinomannan carrier protein LprG from Mycobacterium leprae (strain TN).